Consider the following 796-residue polypeptide: Protein translocase subunit SecA 2 (796 aa).

ATP contacts are provided by residues Gln-84, 102–106 (GEGKT), and Asp-496.

The protein belongs to the SecA family. In terms of assembly, monomer and homodimer. Part of the essential Sec protein translocation apparatus which comprises SecA, SecYEG and auxiliary proteins SecDF. Other proteins may also be involved.

The protein localises to the cell membrane. Its subcellular location is the cytoplasm. It carries out the reaction ATP + H2O + cellular proteinSide 1 = ADP + phosphate + cellular proteinSide 2.. Part of the Sec protein translocase complex. Interacts with the SecYEG preprotein conducting channel. Has a central role in coupling the hydrolysis of ATP to the transfer of proteins into and across the cell membrane, serving as an ATP-driven molecular motor driving the stepwise translocation of polypeptide chains across the membrane. The chain is Protein translocase subunit SecA 2 from Staphylococcus epidermidis (strain ATCC 35984 / DSM 28319 / BCRC 17069 / CCUG 31568 / BM 3577 / RP62A).